The following is a 239-amino-acid chain: Small ribosomal subunit protein uS5 (239 aa).

The segment at 1 to 62 (MADETEIQAA…DDRRGSEEQG (62 aa)) is disordered. Residues 9–19 (AAAPAEAAPGA) are compositionally biased toward low complexity. The segment covering 34–62 (GGNDRGGDRGRGRDGRGRRDDRRGSEEQG) has biased composition (basic and acidic residues). Residues 65–128 (LIEKLVHINR…AAAKKAMVRV (64 aa)) form the S5 DRBM domain.

It belongs to the universal ribosomal protein uS5 family. Part of the 30S ribosomal subunit. Contacts proteins S4 and S8.

Functionally, with S4 and S12 plays an important role in translational accuracy. In terms of biological role, located at the back of the 30S subunit body where it stabilizes the conformation of the head with respect to the body. The chain is Small ribosomal subunit protein uS5 from Rhizorhabdus wittichii (strain DSM 6014 / CCUG 31198 / JCM 15750 / NBRC 105917 / EY 4224 / RW1) (Sphingomonas wittichii).